A 263-amino-acid chain; its full sequence is Acetylglutamate kinase (263 aa).

Residues 49–50 (GG), Arg71, and Asn163 contribute to the substrate site.

Belongs to the acetylglutamate kinase family. ArgB subfamily.

The protein localises to the cytoplasm. It carries out the reaction N-acetyl-L-glutamate + ATP = N-acetyl-L-glutamyl 5-phosphate + ADP. Its pathway is amino-acid biosynthesis; L-arginine biosynthesis; N(2)-acetyl-L-ornithine from L-glutamate: step 2/4. In terms of biological role, catalyzes the ATP-dependent phosphorylation of N-acetyl-L-glutamate. The chain is Acetylglutamate kinase from Moritella abyssi.